The following is a 146-amino-acid chain: Hemoglobin subunit beta (146 aa).

A Globin domain is found at 2–146 (FLTPEENGHV…VANALAHKYH (145 aa)). Threonine 12 carries the post-translational modification Phosphothreonine. Serine 44 carries the phosphoserine modification. Position 59 is an N6-acetyllysine (lysine 59). Histidine 63 provides a ligand contact to heme b. N6-acetyllysine is present on lysine 82. Histidine 92 lines the heme b pocket. An S-nitrosocysteine modification is found at cysteine 93. Lysine 144 is modified (N6-acetyllysine).

This sequence belongs to the globin family. Heterotetramer of two alpha chains and two beta chains. Red blood cells.

Its function is as follows. Involved in oxygen transport from the lung to the various peripheral tissues. In Hapalemur griseus (Gray gentle lemur), this protein is Hemoglobin subunit beta (HBB).